The chain runs to 715 residues: Polyribonucleotide nucleotidyltransferase (715 aa).

Residues D487 and D493 each coordinate Mg(2+). The KH domain maps to 554–613; that stretch reads PRIETFKIATDKIREVIGTGGKVIREIVEKTGAKVNIDDDGTVKVASSDGESIKAAIKWI. One can recognise an S1 motif domain in the interval 623–691; sequence NAIYDGTVVK…DRGKTRLSMK (69 aa). The interval 696 to 715 is disordered; that stretch reads ETGEDLEAKQKAAEGATAAE.

The protein belongs to the polyribonucleotide nucleotidyltransferase family. Mg(2+) serves as cofactor.

It is found in the cytoplasm. The enzyme catalyses RNA(n+1) + phosphate = RNA(n) + a ribonucleoside 5'-diphosphate. Functionally, involved in mRNA degradation. Catalyzes the phosphorolysis of single-stranded polyribonucleotides processively in the 3'- to 5'-direction. The polypeptide is Polyribonucleotide nucleotidyltransferase (Rhodopseudomonas palustris (strain BisB18)).